An 87-amino-acid polypeptide reads, in one-letter code: U15-lycotoxin-Ls1f (87 aa).

Residues Met1–Ser20 form the signal peptide. The 46-residue stretch at Asp21 to Thr66 folds into the WAP domain. Disulfide bonds link Cys24–Cys54, Cys32–Cys58, Cys41–Cys53, Cys42–Cys80, and Cys47–Cys62.

Belongs to the venom protein 11 family. 01 (wap-1) subfamily. Contains 5 disulfide bonds. As to expression, expressed by the venom gland.

It is found in the secreted. In terms of biological role, has antibacterial activity. The sequence is that of U15-lycotoxin-Ls1f from Lycosa singoriensis (Wolf spider).